The following is a 466-amino-acid chain: Cysteine--tRNA ligase (466 aa).

Position 30 (C30) interacts with Zn(2+). A 'HIGH' region motif is present at residues 32–42 (PTVYNYIHIGN). Zn(2+) is bound by residues C210, H235, and E239. Positions 267-271 (KMSKS) match the 'KMSKS' region motif. Residue K270 coordinates ATP. At S271 the chain carries Phosphoserine.

Belongs to the class-I aminoacyl-tRNA synthetase family. Monomer. Zn(2+) is required as a cofactor.

Its subcellular location is the cytoplasm. The catalysed reaction is tRNA(Cys) + L-cysteine + ATP = L-cysteinyl-tRNA(Cys) + AMP + diphosphate. This Geobacillus sp. (strain WCH70) protein is Cysteine--tRNA ligase.